The primary structure comprises 566 residues: Arginine--tRNA ligase (566 aa).

Positions 124 to 134 match the 'HIGH' region motif; it reads ANPNGPLHIGH.

This sequence belongs to the class-I aminoacyl-tRNA synthetase family.

The protein resides in the cytoplasm. The enzyme catalyses tRNA(Arg) + L-arginine + ATP = L-arginyl-tRNA(Arg) + AMP + diphosphate. This chain is Arginine--tRNA ligase (argS), found in Methanocaldococcus jannaschii (strain ATCC 43067 / DSM 2661 / JAL-1 / JCM 10045 / NBRC 100440) (Methanococcus jannaschii).